The chain runs to 1279 residues: Sterol regulatory element-binding protein cleavage-activating protein (1279 aa).

Residues 1–18 (MTLTERLREKISRAFYNH) lie on the Cytoplasmic side of the membrane. Residues 19–39 (GLLCASYPIPIILFTGFCILA) form a helical membrane-spanning segment. The Lumenal portion of the chain corresponds to 40–279 (CCYPLLKLPL…SLVHVHFKEE (240 aa)). Residues 46 to 284 (KLPLPGTGPV…HFKEEIGVAE (239 aa)) are loop-1. The tract at residues 60-80 (PVKDYSPPPVDSDRKQGEPTE) is disordered. The N-linked (GlcNAc...) asparagine glycan is linked to Asn-263. A helical membrane pass occupies residues 280–300 (IGVAELIPLVTTYIILFAYIY). An SSD domain is found at 284–442 (ELIPLVTTYI…MLFFTTVLSI (159 aa)). The Cytoplasmic segment spans residues 301 to 312 (FSTRKIDMVKSK). A helical transmembrane segment spans residues 313-333 (WGLALAAVVTVLSSLLMSVGL). The Lumenal segment spans residues 334 to 344 (CTLFGLTPTLN). The chain crosses the membrane as a helical span at residues 345-365 (GGEIFPYLVVVIGLENVLVLT). The Cytoplasmic portion of the chain corresponds to 366 to 401 (KSVVSTPVDLEVKLRIAQGLSSESWSIMKNMATELG). The chain crosses the membrane as a helical span at residues 402–422 (IILIGYFTLVPAIQEFCLFAV). A topological domain (lumenal) is located at residue Val-423. Residues 424 to 444 (GLVSDFFLQMLFFTTVLSIDI) form a helical membrane-spanning segment. Residues 445-518 (RRMELADLNK…FLARTRLAQR (74 aa)) lie on the Cytoplasmic side of the membrane. The ER export signal motif lies at 447-452 (MELADL). Glycyl lysine isopeptide (Lys-Gly) (interchain with G-Cter in ubiquitin) cross-links involve residues Lys-454 and Lys-466. Residues 519–539 (LIMAGTVVWIGILVYTDPAGL) form a helical membrane-spanning segment. Residues 535 to 710 (DPAGLRNYLA…QAHGDVTLYK (176 aa)) are loop-7. Residues 540–709 (RNYLAAQVTE…VQAHGDVTLY (170 aa)) are Lumenal-facing. Positions 579-615 (IFPPDAPKLPENQTSPGESPERGGPAEVVHDSPVPEV) are disordered. N-linked (GlcNAc...) asparagine glycosylation is found at Asn-590 and Asn-641. The segment at 668–696 (EGRHPQDGRSAWPPPGPIPAGHWEAGPKG) is disordered. The helical transmembrane segment at 710–730 (KVAALGLATGIVLVLLLLCLY) threads the bilayer. The Cytoplasmic segment spans residues 731-1279 (RVLCPRNYGQ…YVPSVLEKLD (549 aa)). The segment at 731-1279 (RVLCPRNYGQ…YVPSVLEKLD (549 aa)) is interaction with SREBF2. The WD 1 repeat unit spans residues 771–811 (VLRGHLMDIECLASDGMLLVSCCLAGHVCVWDAQTGDCLTR). The disordered stretch occupies residues 811–904 (RIPRPGRQRR…PRHRAVCGRS (94 aa)). A phosphoserine mark is found at Ser-822, Ser-838, and Ser-851. The span at 877–891 (IDTNFSAQPRSSQPT) shows a compositional bias: polar residues. 2 positions are modified to phosphoserine: Ser-907 and Ser-937. Residues 931–962 (PALRPPSPGPVLSQAPEDEGGSPEKGSPSLAW) are disordered. WD repeat units follow at residues 952–1002 (SPEK…LCCS) and 1005–1042 (EVSS…ALSP). Arg-1051 bears the Omega-N-methylarginine mark. WD repeat units lie at residues 1077-1114 (AHQK…CLFT), 1117-1155 (GHSG…RVSH), 1158-1195 (AHRG…KFYS), and 1197-1235 (QQDL…LLQT).

Belongs to the WD repeat SCAP family. As to quaternary structure, membrane region forms a homotetramer. Component of the SCAP-SREBP complex (composed of SCAP and SREBF1/SREBP1 or SREBF2/SREBP2); interacts with SREBF1/SREBP1 or SREBF2/SREBP2 through its C-terminal cytoplasmic domain. Forms a ternary complex with INSIG1 or INSIG2 through its transmembrane domains at high sterol concentrations. Interacts with PAQR3; the interaction anchors the SCAP-SREBP complex to the Golgi apparatus in low cholesterol conditions. Interacts with the SEC23-SEC24 complex in a SAR1-GTP-dependent manner through an ER export signal in its third cytoplasmic loop. Interacts with RNF139; the interaction inhibits the interaction of SCAP with SEC24B and hampering the ER to Golgi transport of the SCAP-SREBP complex. Interacts with SPRING1. Post-translationally, ubiquitinated at Lys-454 and Lys-466. RNF145 triggers ubiquitination of SCAP, likely inhibiting SCAP-SREBP complex transport to the Golgi apparatus and the subsequent processing/maturation of SREBF2/SREBP2.

It is found in the endoplasmic reticulum membrane. The protein localises to the golgi apparatus membrane. It localises to the cytoplasmic vesicle. The protein resides in the COPII-coated vesicle membrane. In terms of biological role, escort protein required for cholesterol as well as lipid homeostasis. Regulates export of the SCAP-SREBP complex from the endoplasmic reticulum to the Golgi upon low cholesterol, thereby regulating the processing of sterol regulatory element-binding proteins (SREBPs) SREBF1/SREBP1 and SREBF2/SREBP2. At high sterol concentrations, formation of a ternary complex with INSIG (INSIG1 or INSIG2) leads to mask the ER export signal in SCAP, promoting retention of the complex in the endoplasmic reticulum. Low sterol concentrations trigger release of INSIG, a conformational change in the SSD domain of SCAP, unmasking of the ER export signal, promoting recruitment into COPII-coated vesicles and transport of the SCAP-SREBP to the Golgi: in the Golgi, SREBPs are then processed, releasing the transcription factor fragment of SREBPs from the membrane, its import into the nucleus and up-regulation of LDLR, INSIG1 and the mevalonate pathway. Binds cholesterol via its SSD domain. The polypeptide is Sterol regulatory element-binding protein cleavage-activating protein (Homo sapiens (Human)).